We begin with the raw amino-acid sequence, 767 residues long: Cap-specific mRNA (nucleoside-2'-O-)-methyltransferase 2 (767 aa).

The region spanning 109–322 is the Adrift-type SAM-dependent 2'-O-MTase domain; that stretch reads ELCTQAWCKF…VYVVCLRYKG (214 aa). K117 is an active-site residue. Residues G148, W167, and D235 each contribute to the S-adenosyl-L-methionine site. D235 is an active-site residue. K275 (proton acceptor) is an active-site residue.

The protein localises to the nucleus. It is found in the cytoplasm. It carries out the reaction a 5'-end (N(7)-methyl 5'-triphosphoguanosine)-(2'-O-methyl-ribonucleoside)-(ribonucleotide) in mRNA + S-adenosyl-L-methionine = a 5'-end (N(7)-methyl 5'-triphosphoguanosine)-(2'-O-methyl-ribonucleoside)-(2'-O-methyl-ribonucleotide) in mRNA + S-adenosyl-L-homocysteine + H(+). S-adenosyl-L-methionine-dependent methyltransferase that mediates mRNA cap2 2'-O-ribose methylation to the 5'-cap structure of mRNAs. Methylates the ribose of the second nucleotide of a m(7)GpppG-capped mRNA and small nuclear RNA (snRNA) (cap0) to produce m(7)GpppRmpNm (cap2). Recognizes a guanosine cap on RNA independently of its N(7) methylation status. Display cap2 methylation on both cap0 and cap1. Displays a preference for cap1 RNAs. This chain is Cap-specific mRNA (nucleoside-2'-O-)-methyltransferase 2 (Cmtr2), found in Mus musculus (Mouse).